The primary structure comprises 253 residues: Vitamin B12 import ATP-binding protein BtuD (253 aa).

The ABC transporter domain occupies 4–236 (LQLNNVSVGT…DVLSQVFEVD (233 aa)). 32 to 39 (GPNGAGKS) is an ATP binding site.

This sequence belongs to the ABC transporter superfamily. Vitamin B12 importer (TC 3.A.1.13.1) family. In terms of assembly, the complex is composed of two ATP-binding proteins (BtuD), two transmembrane proteins (BtuC) and a solute-binding protein (BtuF).

It localises to the cell inner membrane. The catalysed reaction is an R-cob(III)alamin(out) + ATP + H2O = an R-cob(III)alamin(in) + ADP + phosphate + H(+). Its function is as follows. Part of the ABC transporter complex BtuCDF involved in vitamin B12 import. Responsible for energy coupling to the transport system. This is Vitamin B12 import ATP-binding protein BtuD from Yersinia pestis.